The sequence spans 416 residues: Gamma-glutamyl phosphate reductase (416 aa).

It belongs to the gamma-glutamyl phosphate reductase family.

It localises to the cytoplasm. It carries out the reaction L-glutamate 5-semialdehyde + phosphate + NADP(+) = L-glutamyl 5-phosphate + NADPH + H(+). It participates in amino-acid biosynthesis; L-proline biosynthesis; L-glutamate 5-semialdehyde from L-glutamate: step 2/2. Its function is as follows. Catalyzes the NADPH-dependent reduction of L-glutamate 5-phosphate into L-glutamate 5-semialdehyde and phosphate. The product spontaneously undergoes cyclization to form 1-pyrroline-5-carboxylate. This Actinobacillus succinogenes (strain ATCC 55618 / DSM 22257 / CCUG 43843 / 130Z) protein is Gamma-glutamyl phosphate reductase.